The chain runs to 274 residues: Large ribosomal subunit protein uL2 (274 aa).

Residues 223–274 form a disordered region; that stretch reads VAMNPVDHPHGGGEGRTSGGRHPVTPWGVPTKGYKTRSNKRTDKYIVRRRNK.

This sequence belongs to the universal ribosomal protein uL2 family. As to quaternary structure, part of the 50S ribosomal subunit. Forms a bridge to the 30S subunit in the 70S ribosome.

Its function is as follows. One of the primary rRNA binding proteins. Required for association of the 30S and 50S subunits to form the 70S ribosome, for tRNA binding and peptide bond formation. It has been suggested to have peptidyltransferase activity; this is somewhat controversial. Makes several contacts with the 16S rRNA in the 70S ribosome. The chain is Large ribosomal subunit protein uL2 from Shewanella sp. (strain ANA-3).